A 288-amino-acid chain; its full sequence is Long chain fatty acid elongase 1 (288 aa).

Transmembrane regions (helical) follow at residues Phe-39–Phe-59, Leu-73–Val-93, Trp-126–Leu-146, Pro-150–His-170, Gly-180–Leu-197, Ile-217–Thr-237, and Val-247–Leu-267.

It belongs to the ELO family.

The protein resides in the membrane. The catalysed reaction is (6Z,9Z,12Z)-octadecatrienoyl-CoA + malonyl-CoA + H(+) = (8Z,11Z,14Z)-3-oxoeicosatrienoyl-CoA + CO2 + CoA. It carries out the reaction (6Z,9Z,12Z,15Z)-octadecatetraenoyl-CoA + malonyl-CoA + H(+) = (8Z,11Z,14Z,17Z)-3-oxoicosatetraenoyl-CoA + CO2 + CoA. It catalyses the reaction (9Z)-hexadecenoyl-CoA + malonyl-CoA + H(+) = 3-oxo-(11Z)-octadecenoyl-CoA + CO2 + CoA. It participates in lipid metabolism; fatty acid biosynthesis. Functionally, catalyzes the first and rate-limiting reaction of the four reactions that constitute the long-chain fatty acids elongation cycle. Uses malonyl-CoA to add 2 carbons per cycle to the chain of long-chain fatty acids. Condensing enzyme that catalyzes the elongation of monounsaturated (MUFA) and polyunsaturated (PUFA) fatty acids that are involved in multiple biological processes as precursors of membrane lipids and lipid mediators. This chain is Long chain fatty acid elongase 1, found in Caenorhabditis elegans.